The following is a 194-amino-acid chain: Putative adenylate kinase (194 aa).

ATP contacts are provided by Gly-16, Gly-18, Lys-19, Thr-20, and Thr-21. Residues 36-59 (SVGELLAGTPYVTYIPELDTYEIV) form an NMP region. Residues 108–118 (RRGWPLKKILD) are LID. Arg-109 serves as a coordination point for ATP.

This sequence belongs to the adenylate kinase family. AK6 subfamily. In terms of assembly, interacts with uS11. Not a structural component of 40S pre-ribosomes, but transiently interacts with them by binding to uS11.

It catalyses the reaction AMP + ATP = 2 ADP. The catalysed reaction is ATP + H2O = ADP + phosphate + H(+). Its function is as follows. Broad-specificity nucleoside monophosphate (NMP) kinase that catalyzes the reversible transfer of the terminal phosphate group between nucleoside triphosphates and monophosphates. Also has ATPase activity. Involved in the late maturation steps of the 30S ribosomal particles, specifically 16S rRNA maturation. While NMP activity is not required for ribosome maturation, ATPase activity is. Associates transiently with small ribosomal subunit protein uS11. ATP hydrolysis breaks the interaction with uS11. May temporarily remove uS11 from the ribosome to enable a conformational change of the ribosomal RNA that is needed for the final maturation step of the small ribosomal subunit. The protein is Putative adenylate kinase of Pyrobaculum aerophilum (strain ATCC 51768 / DSM 7523 / JCM 9630 / CIP 104966 / NBRC 100827 / IM2).